The sequence spans 185 residues: Ribosome-recycling factor (185 aa).

The protein belongs to the RRF family.

The protein localises to the cytoplasm. In terms of biological role, responsible for the release of ribosomes from messenger RNA at the termination of protein biosynthesis. May increase the efficiency of translation by recycling ribosomes from one round of translation to another. The sequence is that of Ribosome-recycling factor from Hahella chejuensis (strain KCTC 2396).